The chain runs to 476 residues: Eukaryotic translation initiation factor 3 subunit L (476 aa).

The PCI domain occupies 257–452; it reads DAIRMFSHIL…DLDYALEKDL (196 aa).

This sequence belongs to the eIF-3 subunit L family. Component of the eukaryotic translation initiation factor 3 (eIF-3) complex.

The protein localises to the cytoplasm. Component of the eukaryotic translation initiation factor 3 (eIF-3) complex, which is involved in protein synthesis of a specialized repertoire of mRNAs and, together with other initiation factors, stimulates binding of mRNA and methionyl-tRNAi to the 40S ribosome. The eIF-3 complex specifically targets and initiates translation of a subset of mRNAs involved in cell proliferation. This Emericella nidulans (strain FGSC A4 / ATCC 38163 / CBS 112.46 / NRRL 194 / M139) (Aspergillus nidulans) protein is Eukaryotic translation initiation factor 3 subunit L.